We begin with the raw amino-acid sequence, 72 residues long: UPF0337 protein bsl2407 (72 aa).

The interval 1 to 55 is disordered; sequence MGSTTDKIKGNANEAIGKAKQGIGEATGSDRLKGEGVVQEVKGKGQQAMGDAKDA. Positions 35 to 47 are enriched in low complexity; the sequence is EGVVQEVKGKGQQ.

It belongs to the UPF0337 (CsbD) family.

The protein is UPF0337 protein bsl2407 of Bradyrhizobium diazoefficiens (strain JCM 10833 / BCRC 13528 / IAM 13628 / NBRC 14792 / USDA 110).